A 158-amino-acid polypeptide reads, in one-letter code: Small ribosomal subunit protein uS19 (158 aa).

This sequence belongs to the universal ribosomal protein uS19 family.

Its function is as follows. Protein S19 forms a complex with S13 that binds strongly to the 16S ribosomal RNA. The chain is Small ribosomal subunit protein uS19 from Pyrobaculum calidifontis (strain DSM 21063 / JCM 11548 / VA1).